Reading from the N-terminus, the 382-residue chain is Sphingoid long-chain base transporter RSB1 (382 aa).

Over 1-34 (MSNATNNTLGSLLPQLEAAANSNSLYGGMVPNLR) the chain is Extracellular. Residues Asn3 and Asn6 are each glycosylated (N-linked (GlcNAc...) asparagine). The helical transmembrane segment at 35–55 (FNITMIVIWGILLTIHVVQLL) threads the bilayer. The Cytoplasmic portion of the chain corresponds to 56–57 (MR). A helical membrane pass occupies residues 58–78 (QYWFSIAFICTGILEVLGYIG). At 79–90 (RTWSHSNVADMD) the chain is on the extracellular side. Residues 91-111 (AFLLNMICLTIAPVFTMGGIY) form a helical membrane-spanning segment. The Cytoplasmic segment spans residues 112-135 (YQLAKLIEVYGHRFSLLPSPMAYS). Residues 136–156 (FIFICSDIVSLVVQAVGGGLC) traverse the membrane as a helical segment. Residues 157–171 (GVAVTDGTSTTTGNH) are Extracellular-facing. The helical transmembrane segment at 172 to 192 (VFIAGLAIQVASMAIFLMLWF) threads the bilayer. Residues 193–241 (HFLFRIYISVRWEHINSRPISLSLLKISQTEVDYLYREKFHFLRLEPKR) lie on the Cytoplasmic side of the membrane. The chain crosses the membrane as a helical span at residues 242–262 (WVFHYFNLAMTVAVLTIFTRC). Topologically, residues 263 to 281 (CYRLAELVVGWDGYLITHE) are extracellular. The chain crosses the membrane as a helical span at residues 282 to 302 (WYFIILDALMMAIATVTLTIF). Topologically, residues 303–382 (HPGFAFKGRS…LFSSKKKAKL (80 aa)) are cytoplasmic.

The protein belongs to the lipid-translocating exporter (LTE) (TC 9.A.26.1) family.

The protein resides in the cell membrane. In terms of biological role, catalyzes the ATP-dependent translocation of sphingoid long-chain bases (LCBs) from the cytoplasmic site toward the extracytoplasmic side of the membrane (flip-flop). Involved in the establishment of the functional lipid asymmetry of the plasma membrane. Regulates intracellular levels of LCBs, sphingolipid precursors that are growth inhibitory at increased levels. This is Sphingoid long-chain base transporter RSB1 (RSB1) from Saccharomyces cerevisiae (strain Lalvin EC1118 / Prise de mousse) (Baker's yeast).